We begin with the raw amino-acid sequence, 276 residues long: S-adenosylmethionine decarboxylase proenzyme (276 aa).

Ser-126 (schiff-base intermediate with substrate; via pyruvic acid) is an active-site residue. Pyruvic acid (Ser); by autocatalysis is present on Ser-126. Residue His-131 is the Proton acceptor; for processing activity of the active site. Cys-154 acts as the Proton donor; for catalytic activity in catalysis.

The protein belongs to the prokaryotic AdoMetDC family. Type 2 subfamily. Heterooctamer of four alpha and four beta chains arranged as a tetramer of alpha/beta heterodimers. Requires pyruvate as cofactor. Post-translationally, is synthesized initially as an inactive proenzyme. Formation of the active enzyme involves a self-maturation process in which the active site pyruvoyl group is generated from an internal serine residue via an autocatalytic post-translational modification. Two non-identical subunits are generated from the proenzyme in this reaction, and the pyruvate is formed at the N-terminus of the alpha chain, which is derived from the carboxyl end of the proenzyme. The post-translation cleavage follows an unusual pathway, termed non-hydrolytic serinolysis, in which the side chain hydroxyl group of the serine supplies its oxygen atom to form the C-terminus of the beta chain, while the remainder of the serine residue undergoes an oxidative deamination to produce ammonia and the pyruvoyl group blocking the N-terminus of the alpha chain.

The catalysed reaction is S-adenosyl-L-methionine + H(+) = S-adenosyl 3-(methylsulfanyl)propylamine + CO2. The protein operates within amine and polyamine biosynthesis; S-adenosylmethioninamine biosynthesis; S-adenosylmethioninamine from S-adenosyl-L-methionine: step 1/1. Functionally, catalyzes the decarboxylation of S-adenosylmethionine to S-adenosylmethioninamine (dcAdoMet), the propylamine donor required for the synthesis of the polyamines spermine and spermidine from the diamine putrescine. This is S-adenosylmethionine decarboxylase proenzyme from Alcanivorax borkumensis (strain ATCC 700651 / DSM 11573 / NCIMB 13689 / SK2).